Consider the following 214-residue polypeptide: Urease accessory protein UreG (214 aa).

23-30 (GPVGSGKT) contributes to the GTP binding site.

The protein belongs to the SIMIBI class G3E GTPase family. UreG subfamily. As to quaternary structure, homodimer. UreD, UreF and UreG form a complex that acts as a GTP-hydrolysis-dependent molecular chaperone, activating the urease apoprotein by helping to assemble the nickel containing metallocenter of UreC. The UreE protein probably delivers the nickel.

The protein localises to the cytoplasm. In terms of biological role, facilitates the functional incorporation of the urease nickel metallocenter. This process requires GTP hydrolysis, probably effectuated by UreG. The protein is Urease accessory protein UreG of Bordetella bronchiseptica (strain ATCC BAA-588 / NCTC 13252 / RB50) (Alcaligenes bronchisepticus).